A 372-amino-acid chain; its full sequence is Solute carrier family 35 member F6 (372 aa).

The first 18 residues, 1–18 (MAWTKYQLFLAGLMLVTG), serve as a signal peptide directing secretion. A run of 2 helical transmembrane segments spans residues 48 to 68 (FVQA…FYLL) and 89 to 109 (LLFL…YVAL). Residues 105–160 (MYVALNMTSASSFQMLRGAVIIFTGLFSVAFLDRRLAPSQWLGILITIAGLVVVGL) enclose the EamA domain. Asparagine 110 carries N-linked (GlcNAc...) asparagine glycosylation. A run of 7 helical transmembrane segments spans residues 116 to 136 (SFQM…VAFL), 145 to 165 (WLGI…DLLS), 176 to 196 (VITG…QMVL), 211 to 231 (AVGI…VPMF), 261 to 281 (LIAL…FSGI), 293 to 312 (MVLD…ALGW), and 320 to 336 (ILGF…YNGL). Residue threonine 366 is modified to Phosphothreonine.

Belongs to the SLC35F solute transporter family. As to quaternary structure, interacts with SLC25A5.

Its subcellular location is the mitochondrion. It is found in the lysosome membrane. Functionally, involved in the maintenance of mitochondrial membrane potential in pancreatic ductal adenocarcinoma (PDAC) cells. Promotes pancreatic ductal adenocarcinoma (PDAC) cell growth. May play a role as a nucleotide-sugar transporter. This chain is Solute carrier family 35 member F6 (Slc35f6), found in Mus musculus (Mouse).